A 253-amino-acid polypeptide reads, in one-letter code: 5'-nucleotidase SurE (253 aa).

Positions 8, 9, 39, and 97 each coordinate a divalent metal cation.

This sequence belongs to the SurE nucleotidase family. The cofactor is a divalent metal cation.

The protein localises to the cytoplasm. The enzyme catalyses a ribonucleoside 5'-phosphate + H2O = a ribonucleoside + phosphate. Its function is as follows. Nucleotidase that shows phosphatase activity on nucleoside 5'-monophosphates. This chain is 5'-nucleotidase SurE, found in Aeromonas hydrophila subsp. hydrophila (strain ATCC 7966 / DSM 30187 / BCRC 13018 / CCUG 14551 / JCM 1027 / KCTC 2358 / NCIMB 9240 / NCTC 8049).